The chain runs to 315 residues: Ninja-family protein 1 (315 aa).

Disordered regions lie at residues 1–28, 68–142, and 156–237; these read MASRDFLGRFGGEKGAASDKAGGGAGEA, SLPG…AQEP, and DQGN…TGDL. The span at 99 to 108 shows a compositional bias: basic and acidic residues; it reads ERWRRREMQS. Polar residues predominate over residues 156-166; the sequence is DQGNPSSSMPE. Low complexity-rich tracts occupy residues 184–197 and 221–234; these read SSDNNNNASNQNKS and LRTLRSLTMRTTST.

The protein belongs to the Ninja family.

The protein localises to the nucleus. The chain is Ninja-family protein 1 (AFP-A1) from Triticum aestivum (Wheat).